The chain runs to 886 residues: Pyruvate dehydrogenase E1 component (886 aa).

In terms of assembly, homodimer. Part of the PDH complex, consisting of multiple copies of pyruvate dehydrogenase (E1), dihydrolipoamide acetyltransferase (E2) and lipoamide dehydrogenase (E3). Thiamine diphosphate is required as a cofactor.

The enzyme catalyses N(6)-[(R)-lipoyl]-L-lysyl-[protein] + pyruvate + H(+) = N(6)-[(R)-S(8)-acetyldihydrolipoyl]-L-lysyl-[protein] + CO2. Its function is as follows. Component of the pyruvate dehydrogenase (PDH) complex, that catalyzes the overall conversion of pyruvate to acetyl-CoA and CO(2). The protein is Pyruvate dehydrogenase E1 component (aceE) of Haemophilus influenzae (strain ATCC 51907 / DSM 11121 / KW20 / Rd).